The chain runs to 287 residues: Pantothenate synthetase (287 aa).

ATP is bound at residue 30-37 (MGNLHSGH). Residue His37 is the Proton donor of the active site. Gln61 contributes to the (R)-pantoate binding site. Gln61 is a beta-alanine binding site. 149 to 152 (GEKD) is an ATP binding site. Gln155 provides a ligand contact to (R)-pantoate. Residues Val178 and 186–189 (LSSR) each bind ATP.

Belongs to the pantothenate synthetase family. In terms of assembly, homodimer.

It localises to the cytoplasm. The enzyme catalyses (R)-pantoate + beta-alanine + ATP = (R)-pantothenate + AMP + diphosphate + H(+). Its pathway is cofactor biosynthesis; (R)-pantothenate biosynthesis; (R)-pantothenate from (R)-pantoate and beta-alanine: step 1/1. Its function is as follows. Catalyzes the condensation of pantoate with beta-alanine in an ATP-dependent reaction via a pantoyl-adenylate intermediate. The chain is Pantothenate synthetase from Pseudomonas putida (strain W619).